Consider the following 654-residue polypeptide: Transcription factor E2-alpha (654 aa).

Positions 19–27 (LLDFSMMFP) match the 9aaTAD motif. Positions 31 to 103 (TNGKGRPASL…LGPGLGGKSG (73 aa)) are disordered. Residues 55 to 68 (SSGSWGSGDQSSSS) show a composition bias toward low complexity. Positions 69-79 (FDPSRTFSEGT) are enriched in polar residues. Positions 84 to 94 (SHSSLSSSTFL) are enriched in low complexity. 2 positions are modified to phosphoserine: Ser134 and Ser139. 4 disordered regions span residues 135–205 (PGPL…SAKT), 239–268 (MLGG…FGGL), 292–329 (SFSS…GSSG), and 343–385 (DHSS…YDGG). The span at 147 to 156 (SQYYPSYSGS) shows a compositional bias: low complexity. The short motif at 170–176 (PKKVRKV) is the Nuclear localization signal element. Over residues 256 to 268 (VGSSGSSSTFGGL) the composition is skewed to low complexity. Positions 343–354 (DHSSNNFSSSPS) are enriched in low complexity. Thr355 is modified (phosphothreonine). Ser359 bears the Phosphoserine mark. Arg371 bears the Omega-N-methylarginine mark. Phosphoserine is present on Ser379. The interval 389 to 425 (LQSKIEDHLDEAIHVLRSHAVGTAGDMHTLLPGHGAL) is leucine-zipper. Residues 461–552 (NHAALPSQPG…KAEREKERRV (92 aa)) form a disordered region. Residue Lys498 forms a Glycyl lysine isopeptide (Lys-Gly) (interchain with G-Cter in SUMO2) linkage. A compositionally biased stretch (basic and acidic residues) spans 512-523 (DHSEEEKKELKA). At Ser529 the chain carries Phosphoserine. Asp531 bears the Phosphothreonine mark. Residues 542–552 (QKAEREKERRV) show a composition bias toward basic and acidic residues. Residues 549 to 602 (ERRVANNARERLRVRDINEAFKELGRMCQLHLNSEKPQTKLLILHQAVSVILNL) form the bHLH domain. Lys625 is covalently cross-linked (Glycyl lysine isopeptide (Lys-Gly) (interchain with G-Cter in SUMO2)). Residues 633-654 (PQMVLSAPHPGLSEAHNPAGHM) form a disordered region.

In terms of assembly, homodimer. Heterodimer; efficient DNA binding requires dimerization with another bHLH protein. Forms a heterodimer with ASH1, TWIST1 and TWIST2. Forms a heterodimer with MYOG; heterodimerization enhances MYOG DNA-binding and transcriptional activities. Forms a heterodimer with NEUROD1; the heterodimer is inhibited in presence of ID2, but not NR0B2, to E-box element. Forms a heterodimer with TCF15; the heterodimer binds E-box element. Forms a heterodimer with ATOH8; repress transcription of TCF3 and TCF3/NEUROG3 dimer-induced transactivation of E box-dependent promoters. Component of a nuclear TAL-1 complex composed at least of CBFA2T3, LDB1, TAL1 and TCF3. Interacts with NEUROD2, PTF1A and TGFB1I1. Interacts with EP300 and UBE2I. Interacts with BHLHA9. Interacts with ASB2; the interaction is mediated by SKP2 and targets TCF3 for Notch-induced proteasomal degradation. Forms a heterodimer with ATOH7; required for ATOH7 DNA-binding. As to quaternary structure, interacts with RALGAPA1 and FIGLA. Post-translationally, phosphorylated following NGF stimulation. In terms of processing, undergoes Notch-induced ubiquitination and subsequent proteasomal degradation which is mediated by ASB1 or ASB2, the substrate-recognition components of probable ECS E3 ubiquitin-protein ligase complexes.

The protein localises to the nucleus. In terms of biological role, transcriptional regulator involved in the initiation of neuronal differentiation and mesenchymal to epithelial transition. Heterodimers between TCF3 and tissue-specific basic helix-loop-helix (bHLH) proteins play major roles in determining tissue-specific cell fate during embryogenesis, like muscle or early B-cell differentiation. Together with TCF15, required for the mesenchymal to epithelial transition. Dimers bind DNA on E-box motifs: 5'-CANNTG-3'. Binds to the kappa-E2 site in the kappa immunoglobulin gene enhancer. Binds to IEB1 and IEB2, which are short DNA sequences in the insulin gene transcription control region. Facilitates ATOH7 binding to DNA at the consensus sequence 5'-CAGGTG-3', and positively regulates transcriptional activity. This chain is Transcription factor E2-alpha (TCF3), found in Homo sapiens (Human).